A 445-amino-acid polypeptide reads, in one-letter code: Phosphoglucosamine mutase (445 aa).

The Phosphoserine intermediate role is filled by Ser-102. 4 residues coordinate Mg(2+): Ser-102, Asp-241, Asp-243, and Asp-245. Phosphoserine is present on Ser-102.

Belongs to the phosphohexose mutase family. Requires Mg(2+) as cofactor. Post-translationally, activated by phosphorylation.

It carries out the reaction alpha-D-glucosamine 1-phosphate = D-glucosamine 6-phosphate. Its function is as follows. Catalyzes the conversion of glucosamine-6-phosphate to glucosamine-1-phosphate. The sequence is that of Phosphoglucosamine mutase from Shewanella oneidensis (strain ATCC 700550 / JCM 31522 / CIP 106686 / LMG 19005 / NCIMB 14063 / MR-1).